The chain runs to 158 residues: UPF0225 protein Pput_1155 (158 aa).

The protein belongs to the UPF0225 family.

The chain is UPF0225 protein Pput_1155 from Pseudomonas putida (strain ATCC 700007 / DSM 6899 / JCM 31910 / BCRC 17059 / LMG 24140 / F1).